Here is a 393-residue protein sequence, read N- to C-terminus: Probable pectinesterase 8 (393 aa).

Residues 1 to 19 (MKIISLSISIGIAIIAVLA) form the signal peptide. Residues Asn-100, Asn-113, Asn-140, Asn-156, and Asn-163 are each glycosylated (N-linked (GlcNAc...) asparagine). Thr-165 serves as a coordination point for substrate. An N-linked (GlcNAc...) asparagine glycan is attached at Asn-182. Gln-200 provides a ligand contact to substrate. Catalysis depends on Asp-223, which acts as the Proton donor. Asp-244 functions as the Nucleophile in the catalytic mechanism. Asn-295 carries N-linked (GlcNAc...) asparagine glycosylation. Arg-308 contacts substrate. Residues Asn-350, Asn-369, and Asn-378 are each glycosylated (N-linked (GlcNAc...) asparagine).

Belongs to the pectinesterase family. As to expression, expressed in siliques.

It localises to the secreted. Its subcellular location is the cell wall. The enzyme catalyses [(1-&gt;4)-alpha-D-galacturonosyl methyl ester](n) + n H2O = [(1-&gt;4)-alpha-D-galacturonosyl](n) + n methanol + n H(+). It participates in glycan metabolism; pectin degradation; 2-dehydro-3-deoxy-D-gluconate from pectin: step 1/5. In terms of biological role, acts in the modification of cell walls via demethylesterification of cell wall pectin. The chain is Probable pectinesterase 8 (PME8) from Arabidopsis thaliana (Mouse-ear cress).